The primary structure comprises 240 residues: MATLFIADLHLQTEEPAIVAGFLRFLAVEARQADALYILGDLFEAWIGDDDPNPLHREMAVAIKSLVDSGVPCFFIHGNRDFLIGKRFARESGMTLLPQEKVLDLYGRNVLIMHGDTLCTDDAGYQAFRAKVHNPWVQRLFLTLPLFIRRRIAARMRAGSKAANSSKSLDIMDVNAQTVVAEMEKHRVQWLIHGHTHRPAVHELSANDQPAFRVVLGAWHHEGSMVKVTPDNVELIAFPL.

Positions 8, 10, 41, 79, and 114 each coordinate Mn(2+). Asn79 to Arg80 contacts substrate. The substrate site is built by Asp122, Ser160, Asn164, Lys167, and His195. The Mn(2+) site is built by His195 and His197.

This sequence belongs to the LpxH family. Requires Mn(2+) as cofactor.

The protein resides in the cell inner membrane. The catalysed reaction is UDP-2-N,3-O-bis[(3R)-3-hydroxytetradecanoyl]-alpha-D-glucosamine + H2O = 2-N,3-O-bis[(3R)-3-hydroxytetradecanoyl]-alpha-D-glucosaminyl 1-phosphate + UMP + 2 H(+). It participates in glycolipid biosynthesis; lipid IV(A) biosynthesis; lipid IV(A) from (3R)-3-hydroxytetradecanoyl-[acyl-carrier-protein] and UDP-N-acetyl-alpha-D-glucosamine: step 4/6. Functionally, hydrolyzes the pyrophosphate bond of UDP-2,3-diacylglucosamine to yield 2,3-diacylglucosamine 1-phosphate (lipid X) and UMP by catalyzing the attack of water at the alpha-P atom. Involved in the biosynthesis of lipid A, a phosphorylated glycolipid that anchors the lipopolysaccharide to the outer membrane of the cell. The protein is UDP-2,3-diacylglucosamine hydrolase of Salmonella paratyphi A (strain ATCC 9150 / SARB42).